The following is a 129-amino-acid chain: Large ribosomal subunit protein uL14m (129 aa).

Belongs to the universal ribosomal protein uL14 family. As to quaternary structure, component of the mitochondrial ribosome large subunit (39S) which comprises a 16S rRNA and about 50 distinct proteins.

It is found in the mitochondrion. The protein is Large ribosomal subunit protein uL14m (mrpl14) of Dictyostelium discoideum (Social amoeba).